Here is a 284-residue protein sequence, read N- to C-terminus: 2-dehydro-3-deoxyphosphooctonate aldolase (284 aa).

The protein belongs to the KdsA family.

It is found in the cytoplasm. It catalyses the reaction D-arabinose 5-phosphate + phosphoenolpyruvate + H2O = 3-deoxy-alpha-D-manno-2-octulosonate-8-phosphate + phosphate. It functions in the pathway carbohydrate biosynthesis; 3-deoxy-D-manno-octulosonate biosynthesis; 3-deoxy-D-manno-octulosonate from D-ribulose 5-phosphate: step 2/3. It participates in bacterial outer membrane biogenesis; lipopolysaccharide biosynthesis. This chain is 2-dehydro-3-deoxyphosphooctonate aldolase, found in Paraburkholderia phymatum (strain DSM 17167 / CIP 108236 / LMG 21445 / STM815) (Burkholderia phymatum).